Consider the following 131-residue polypeptide: Large-conductance mechanosensitive channel (131 aa).

A run of 3 helical transmembrane segments spans residues 8–28 (FAVRGNVIDLAVGVIIGGAFG), 30–50 (IVSSLVNDIIMPLVGLILGGI), and 67–87 (GAFLQTVVDFLVIAFSIFLFV).

It belongs to the MscL family. In terms of assembly, homopentamer.

It is found in the cell membrane. Channel that opens in response to stretch forces in the membrane lipid bilayer. May participate in the regulation of osmotic pressure changes within the cell. The polypeptide is Large-conductance mechanosensitive channel (Anoxybacillus flavithermus (strain DSM 21510 / WK1)).